The chain runs to 514 residues: MDAASSSLALSNIKLHGSTNTLNSDQRISSLCSLPKSRVTFSCKTSGNLQVRDRSTGLVVSCSSSNGDRDVIQGLHLSGPIEKKSRLGQACCSVGTFTVGEFALESQSQAVDDKVGVLLLNLGGPETLDDVQPFLYNLFADPDIIRLPRLFRFLQEPLAKLISTYRAPKSKEGYASIGGGSPLRKITDEQAQALKMALAEKNMSTNVYVGMRYWYPFTEEAIQQIKRDGITRLVVLPLYPQYSISTTGSSIRVLQKMFREDAYLSSLPVSIIKSWYQREGYIKSMADLMQAELKNFANPQEVMIFFSAHGVPVSYVENAGDPYKDQMEECICLIMQELKARGIGNEHTLAYQSRVGPVQWLKPYTDEVLVELGQKGIKSLLAVPVSFVSEHIETLEEIDMEYKHLALESGIQNWGRVPALNCNSSFISDLADAVIEALPSATALAPHTSSTDADDHDPFLYAIKLLFGSVLAFILLLSPKAFMVFRNNFLLNYTRIYGYRGERSEFFWVRLIFT.

Belongs to the ferrochelatase family.

The protein localises to the plastid. Its subcellular location is the chloroplast. The enzyme catalyses heme b + 2 H(+) = protoporphyrin IX + Fe(2+). The protein operates within porphyrin-containing compound metabolism; protoheme biosynthesis; protoheme from protoporphyrin-IX: step 1/1. Functionally, catalyzes the ferrous insertion into protoporphyrin IX. This chain is Ferrochelatase-2, chloroplastic (HEMH), found in Cucumis sativus (Cucumber).